The chain runs to 185 residues: Ribosome-recycling factor (185 aa).

This sequence belongs to the RRF family.

The protein resides in the cytoplasm. Responsible for the release of ribosomes from messenger RNA at the termination of protein biosynthesis. May increase the efficiency of translation by recycling ribosomes from one round of translation to another. The chain is Ribosome-recycling factor from Mannheimia succiniciproducens (strain KCTC 0769BP / MBEL55E).